The chain runs to 129 residues: Ribosome-binding factor A (129 aa).

This sequence belongs to the RbfA family. Monomer. Binds 30S ribosomal subunits, but not 50S ribosomal subunits or 70S ribosomes.

It is found in the cytoplasm. One of several proteins that assist in the late maturation steps of the functional core of the 30S ribosomal subunit. Associates with free 30S ribosomal subunits (but not with 30S subunits that are part of 70S ribosomes or polysomes). Required for efficient processing of 16S rRNA. May interact with the 5'-terminal helix region of 16S rRNA. This chain is Ribosome-binding factor A, found in Thioalkalivibrio sulfidiphilus (strain HL-EbGR7).